The sequence spans 565 residues: Potassium-transporting ATPase potassium-binding subunit (565 aa).

12 consecutive transmembrane segments (helical) span residues 6-26, 63-83, 132-152, 175-195, 250-270, 283-303, 327-347, 354-374, 379-399, 418-438, 483-503, and 524-544; these read LMLLGLLILLLLILAPLLGSL, LLAILAFNLLGIVLLFALLMA, GLGVQNFLSAASGIAVLFALI, LYVLLPLSLLLSLLFVSQGVI, LSNLLQMVAIFLLPTALCFAF, LLWTMSLIFIVAAGCVMYAEL, FGILASALYAVVTTAASCGAV, FTALGGMVPMWLMQIGEVVFG, GLYGMLLFVLLTVFIAGLMIG, ALAILIPPALVLTGSAIALLC, LLLALVMLIGRFGVIIPVMAI, and GALFVSLLIGTILLVGALTFI.

This sequence belongs to the KdpA family. As to quaternary structure, the system is composed of three essential subunits: KdpA, KdpB and KdpC.

It localises to the cell inner membrane. Its function is as follows. Part of the high-affinity ATP-driven potassium transport (or Kdp) system, which catalyzes the hydrolysis of ATP coupled with the electrogenic transport of potassium into the cytoplasm. This subunit binds the periplasmic potassium ions and delivers the ions to the membrane domain of KdpB through an intramembrane tunnel. In Edwardsiella ictaluri (strain 93-146), this protein is Potassium-transporting ATPase potassium-binding subunit.